Consider the following 150-residue polypeptide: Azurin (150 aa).

Residues 1-21 (MFKQVLGGMALMAAFSAPVLA) form the signal peptide. Positions 22–150 (AECSVDIAGT…LMKGTLKLVD (129 aa)) constitute a Plastocyanin-like domain. C24 and C47 form a disulfide bridge. H67, C133, H138, and M142 together coordinate Cu cation.

The protein localises to the periplasm. The sequence is that of Azurin from Bordetella bronchiseptica (strain ATCC BAA-588 / NCTC 13252 / RB50) (Alcaligenes bronchisepticus).